We begin with the raw amino-acid sequence, 445 residues long: MATTAAASPPAIATALSALLRRQRRRSSRCVGASHARCLAADANAEAVAPSRRGGHGGTRLEEAVPAGEGRSRIDAWISARLGGGGVSRARIQASIRAGLVVVNGRPVSKVSHMVKGGDIVSCTVLELQPLRAEPEDIPLDIVYEDDHLLVVNKPAHMVVHPAPGNANGTLVNAILHHCKISTFTCLARNSIDDECPDSSDDDIDVFDIDQFTTGEVSSEVREALVRPGIVHRLDKGTSGLLVVAKDEHSHAQLAEQFKLHTIRRVYISLTCGAPNPNSGRIEVPIARDPNNRIRMIATPGSGHRYARHAASRYKVREVFAGGGSALVEWRLETGRTHQIRAHAKYLGIPLLGDETYGGTKSMALSLLRPRTPSRYHCDLSNMISKIDRPCLHAALLGFKHPHSGKILEFSCPPPDDFTEVLNELHQVTLASNGNSGGGVARICD.

A chloroplast-targeting transit peptide spans 1–44 (MATTAAASPPAIATALSALLRRQRRRSSRCVGASHARCLAADAN). Residues 47-66 (AVAPSRRGGHGGTRLEEAVP) form a disordered region. Residues 72–147 (SRIDAWISAR…IPLDIVYEDD (76 aa)) enclose the S4 RNA-binding domain. D235 is an active-site residue.

The protein belongs to the pseudouridine synthase RluA family.

Its subcellular location is the plastid. The protein resides in the chloroplast. It catalyses the reaction a uridine in RNA = a pseudouridine in RNA. This is RNA pseudouridine synthase 2, chloroplastic from Oryza sativa subsp. japonica (Rice).